Here is a 348-residue protein sequence, read N- to C-terminus: UDP-glucose 4-epimerase (348 aa).

NAD(+) contacts are provided by residues 12–14 (GYI), 33–37 (DNFHN), 66–67 (DI), phenylalanine 88, and lysine 92. 132–134 (SAT) lines the substrate pocket. Tyrosine 157 (proton acceptor) is an active-site residue. 2 residues coordinate NAD(+): lysine 161 and tyrosine 185. Substrate contacts are provided by residues 185-187 (YFN), 206-208 (NNL), 224-226 (NVF), arginine 239, and 300-303 (REGD).

This sequence belongs to the NAD(P)-dependent epimerase/dehydratase family. As to quaternary structure, homodimer. NAD(+) is required as a cofactor.

The enzyme catalyses UDP-alpha-D-glucose = UDP-alpha-D-galactose. The catalysed reaction is UDP-N-acetyl-alpha-D-glucosamine = UDP-N-acetyl-alpha-D-galactosamine. It functions in the pathway carbohydrate metabolism; galactose metabolism. Its function is as follows. Catalyzes two distinct but analogous reactions: the reversible epimerization of UDP-glucose to UDP-galactose and the reversible epimerization of UDP-N-acetylglucosamine to UDP-N-acetylgalactosamine. The reaction with UDP-Gal plays a critical role in the Leloir pathway of galactose catabolism in which galactose is converted to the glycolytic intermediate glucose 6-phosphate. It contributes to the catabolism of dietary galactose and enables the endogenous biosynthesis of both UDP-Gal and UDP-GalNAc when exogenous sources are limited. Both UDP-sugar interconversions are important in the synthesis of glycoproteins and glycolipids. This chain is UDP-glucose 4-epimerase (GALE), found in Pongo abelii (Sumatran orangutan).